The sequence spans 348 residues: Heat-inducible transcription repressor HrcA (348 aa).

This sequence belongs to the HrcA family.

Negative regulator of class I heat shock genes (grpE-dnaK-dnaJ and groELS operons). Prevents heat-shock induction of these operons. The polypeptide is Heat-inducible transcription repressor HrcA (Syntrophobacter fumaroxidans (strain DSM 10017 / MPOB)).